The primary structure comprises 162 residues: Ribosome maturation factor RimP (162 aa).

The protein belongs to the RimP family.

Its subcellular location is the cytoplasm. Required for maturation of 30S ribosomal subunits. This is Ribosome maturation factor RimP from Cupriavidus metallidurans (strain ATCC 43123 / DSM 2839 / NBRC 102507 / CH34) (Ralstonia metallidurans).